The sequence spans 126 residues: Small ribosomal subunit protein uS13 (126 aa).

The interval 98–126 is disordered; sequence PVRGQSTKNNARTRKGRKKTVANKKKATK. A compositionally biased stretch (basic residues) spans 108 to 126; it reads ARTRKGRKKTVANKKKATK.

It belongs to the universal ribosomal protein uS13 family. In terms of assembly, part of the 30S ribosomal subunit. Forms a loose heterodimer with protein S19. Forms two bridges to the 50S subunit in the 70S ribosome.

Functionally, located at the top of the head of the 30S subunit, it contacts several helices of the 16S rRNA. In the 70S ribosome it contacts the 23S rRNA (bridge B1a) and protein L5 of the 50S subunit (bridge B1b), connecting the 2 subunits; these bridges are implicated in subunit movement. Contacts the tRNAs in the A and P-sites. This Bacteroides fragilis (strain ATCC 25285 / DSM 2151 / CCUG 4856 / JCM 11019 / LMG 10263 / NCTC 9343 / Onslow / VPI 2553 / EN-2) protein is Small ribosomal subunit protein uS13.